Here is an 882-residue protein sequence, read N- to C-terminus: DNA mismatch repair protein MutS (882 aa).

The segment at 1–22 (MTLPSDFPLEPPATNKDPHRDY) is disordered. Position 662 to 669 (662 to 669 (GPNASGKS)) interacts with ATP.

The protein belongs to the DNA mismatch repair MutS family.

Functionally, this protein is involved in the repair of mismatches in DNA. It is possible that it carries out the mismatch recognition step. This protein has a weak ATPase activity. The protein is DNA mismatch repair protein MutS of Microcystis aeruginosa (strain NIES-843 / IAM M-2473).